The sequence spans 84 residues: Small ribosomal subunit protein uS17 (84 aa).

The protein belongs to the universal ribosomal protein uS17 family. In terms of assembly, part of the 30S ribosomal subunit.

Functionally, one of the primary rRNA binding proteins, it binds specifically to the 5'-end of 16S ribosomal RNA. This Alkaliphilus metalliredigens (strain QYMF) protein is Small ribosomal subunit protein uS17.